The following is a 274-amino-acid chain: Shikimate dehydrogenase (NADP(+)) (274 aa).

Residues 14–16 (SKS) and threonine 61 each bind shikimate. The active-site Proton acceptor is lysine 65. Asparagine 86 and aspartate 102 together coordinate shikimate. Residues 126–130 (GAGGA), 150–155 (NRTAEK), and methionine 214 each bind NADP(+). Residue tyrosine 216 participates in shikimate binding. Glycine 239 is a binding site for NADP(+).

The protein belongs to the shikimate dehydrogenase family. Homodimer.

The catalysed reaction is shikimate + NADP(+) = 3-dehydroshikimate + NADPH + H(+). It functions in the pathway metabolic intermediate biosynthesis; chorismate biosynthesis; chorismate from D-erythrose 4-phosphate and phosphoenolpyruvate: step 4/7. Involved in the biosynthesis of the chorismate, which leads to the biosynthesis of aromatic amino acids. Catalyzes the reversible NADPH linked reduction of 3-dehydroshikimate (DHSA) to yield shikimate (SA). In Pseudoalteromonas translucida (strain TAC 125), this protein is Shikimate dehydrogenase (NADP(+)).